A 312-amino-acid polypeptide reads, in one-letter code: tRNA dimethylallyltransferase (312 aa).

Gly14–Ser21 contributes to the ATP binding site. Thr16–Ser21 is a binding site for substrate. Interaction with substrate tRNA regions lie at residues Asp39–Leu42 and Gln163–Arg167.

The protein belongs to the IPP transferase family. Monomer. Mg(2+) is required as a cofactor.

It catalyses the reaction adenosine(37) in tRNA + dimethylallyl diphosphate = N(6)-dimethylallyladenosine(37) in tRNA + diphosphate. Its function is as follows. Catalyzes the transfer of a dimethylallyl group onto the adenine at position 37 in tRNAs that read codons beginning with uridine, leading to the formation of N6-(dimethylallyl)adenosine (i(6)A). This Methylococcus capsulatus (strain ATCC 33009 / NCIMB 11132 / Bath) protein is tRNA dimethylallyltransferase.